The following is a 131-amino-acid chain: D-ribose pyranase (131 aa).

Histidine 20 (proton donor) is an active-site residue. Substrate-binding positions include aspartate 28, histidine 98, and 120–122 (YAN).

Belongs to the RbsD / FucU family. RbsD subfamily. Homodecamer.

It localises to the cytoplasm. The enzyme catalyses beta-D-ribopyranose = beta-D-ribofuranose. Its pathway is carbohydrate metabolism; D-ribose degradation; D-ribose 5-phosphate from beta-D-ribopyranose: step 1/2. Functionally, catalyzes the interconversion of beta-pyran and beta-furan forms of D-ribose. In Bacillus cytotoxicus (strain DSM 22905 / CIP 110041 / 391-98 / NVH 391-98), this protein is D-ribose pyranase.